A 132-amino-acid polypeptide reads, in one-letter code: Large ribosomal subunit protein bL17 (132 aa).

The protein belongs to the bacterial ribosomal protein bL17 family. In terms of assembly, part of the 50S ribosomal subunit. Contacts protein L32.

The chain is Large ribosomal subunit protein bL17 from Ehrlichia canis (strain Jake).